The chain runs to 439 residues: Mitochondrial distribution and morphology protein 12 (439 aa).

The SMP-LTD domain maps to 1–439; that stretch reads MSIDVNWRSA…VYPSFWTFLI (439 aa). The span at 70–85 shows a compositional bias: acidic residues; sequence YEEDDDDHTSDASEEL. Disordered regions lie at residues 70 to 102, 184 to 274, and 353 to 386; these read YEED…ELNE, SGWS…PPRM, and GSEQ…RHGG. A compositionally biased stretch (basic and acidic residues) spans 197–212; sequence GRSERHAGMKHQRAEP. Residues 215–230 show a composition bias toward polar residues; that stretch reads DTSNSTSRPSTANTLP. Residues 231–240 are compositionally biased toward low complexity; it reads SHPSSSSKNS. The span at 247 to 261 shows a compositional bias: basic and acidic residues; sequence RNDHPSLHAGEHIED.

It belongs to the MDM12 family. As to quaternary structure, component of the ER-mitochondria encounter structure (ERMES) or MDM complex, composed of mmm1, mdm10, mdm12 and mdm34. A mmm1 homodimer associates with one molecule of mdm12 on each side in a pairwise head-to-tail manner, and the SMP-LTD domains of mmm1 and mdm12 generate a continuous hydrophobic tunnel for phospholipid trafficking.

It is found in the mitochondrion outer membrane. Its subcellular location is the endoplasmic reticulum membrane. Component of the ERMES/MDM complex, which serves as a molecular tether to connect the endoplasmic reticulum (ER) and mitochondria. Components of this complex are involved in the control of mitochondrial shape and protein biogenesis, and function in nonvesicular lipid trafficking between the ER and mitochondria. Mdm12 is required for the interaction of the ER-resident membrane protein mmm1 and the outer mitochondrial membrane-resident beta-barrel protein mdm10. The mdm12-mmm1 subcomplex functions in the major beta-barrel assembly pathway that is responsible for biogenesis of all mitochondrial outer membrane beta-barrel proteins, and acts in a late step after the SAM complex. The mdm10-mdm12-mmm1 subcomplex further acts in the TOM40-specific pathway after the action of the mdm12-mmm1 complex. Essential for establishing and maintaining the structure of mitochondria and maintenance of mtDNA nucleoids. The chain is Mitochondrial distribution and morphology protein 12 from Neosartorya fischeri (strain ATCC 1020 / DSM 3700 / CBS 544.65 / FGSC A1164 / JCM 1740 / NRRL 181 / WB 181) (Aspergillus fischerianus).